The chain runs to 427 residues: Serine--tRNA ligase (427 aa).

231-233 contacts L-serine; the sequence is TAE. ATP contacts are provided by residues 262–264 and Val-278; that span reads RRE. Residue Glu-285 coordinates L-serine. 349–352 lines the ATP pocket; that stretch reads EVSS. L-serine is bound at residue Ser-384.

Belongs to the class-II aminoacyl-tRNA synthetase family. Type-1 seryl-tRNA synthetase subfamily. As to quaternary structure, homodimer. The tRNA molecule binds across the dimer.

It localises to the cytoplasm. It carries out the reaction tRNA(Ser) + L-serine + ATP = L-seryl-tRNA(Ser) + AMP + diphosphate + H(+). The enzyme catalyses tRNA(Sec) + L-serine + ATP = L-seryl-tRNA(Sec) + AMP + diphosphate + H(+). It functions in the pathway aminoacyl-tRNA biosynthesis; selenocysteinyl-tRNA(Sec) biosynthesis; L-seryl-tRNA(Sec) from L-serine and tRNA(Sec): step 1/1. Its function is as follows. Catalyzes the attachment of serine to tRNA(Ser). Is also able to aminoacylate tRNA(Sec) with serine, to form the misacylated tRNA L-seryl-tRNA(Sec), which will be further converted into selenocysteinyl-tRNA(Sec). The protein is Serine--tRNA ligase of Chlamydia pneumoniae (Chlamydophila pneumoniae).